The chain runs to 109 residues: Acylphosphatase (109 aa).

One can recognise an Acylphosphatase-like domain in the interval R22–Y109. Catalysis depends on residues R37 and N55.

The protein belongs to the acylphosphatase family.

The enzyme catalyses an acyl phosphate + H2O = a carboxylate + phosphate + H(+). This chain is Acylphosphatase (acyP), found in Arthrobacter sp. (strain FB24).